A 351-amino-acid chain; its full sequence is N-acetyl-gamma-glutamyl-phosphate reductase (351 aa).

Residue cysteine 154 is part of the active site.

It belongs to the NAGSA dehydrogenase family. Type 1 subfamily.

It is found in the cytoplasm. The catalysed reaction is N-acetyl-L-glutamate 5-semialdehyde + phosphate + NADP(+) = N-acetyl-L-glutamyl 5-phosphate + NADPH + H(+). It functions in the pathway amino-acid biosynthesis; L-arginine biosynthesis; N(2)-acetyl-L-ornithine from L-glutamate: step 3/4. In terms of biological role, catalyzes the NADPH-dependent reduction of N-acetyl-5-glutamyl phosphate to yield N-acetyl-L-glutamate 5-semialdehyde. The chain is N-acetyl-gamma-glutamyl-phosphate reductase from Prochlorococcus marinus subsp. pastoris (strain CCMP1986 / NIES-2087 / MED4).